A 174-amino-acid polypeptide reads, in one-letter code: Solute carrier family 2, facilitated glucose transporter member 4 (174 aa).

Residues 1 to 19 lie on the Cytoplasmic side of the membrane; it reads QQIGSEDGEPPQQRVTGTL. The tract at residues 2-8 is interaction with SRFBP1; that stretch reads QIGSEDG. Ser-5 carries the phosphoserine modification. A helical membrane pass occupies residues 20–40; it reads VLAVFSAVLGSLQFGYNIGVI. Residues 41–76 lie on the Extracellular side of the membrane; it reads NAPQKVIEQSYNETWLGRQGPNGPGSIPPGTLTTLW. N-linked (GlcNAc...) asparagine glycosylation is present at Asn-52. Residues 77–97 form a helical membrane-spanning segment; it reads ALSVAIFSVGGMFSSFLLGII. The Cytoplasmic segment spans residues 98–114; the sequence is SQWLGRKKAMLFNNTLA. Residues 115-135 traverse the membrane as a helical segment; it reads VLAGALMGLAKAAASYEMLIL. Residues 136–137 are Extracellular-facing; sequence GR. The helical transmembrane segment at 138–158 threads the bilayer; that stretch reads FLIGAYSGLASGLVPMYVGEI. Topologically, residues 159 to 166 are cytoplasmic; sequence APTHLRGA. Residues 167–174 form a helical membrane-spanning segment; it reads LGTLNQLA.

Belongs to the major facilitator superfamily. Sugar transporter (TC 2.A.1.1) family. Glucose transporter subfamily. In terms of assembly, binds to DAXX. Interacts via its N-terminus with SRFBP1. Interacts with NDUFA9. Interacts with TRARG1; the interaction is required for proper SLC2A4 recycling after insulin stimulation. Post-translationally, sumoylated. In terms of processing, palmitoylated. Palmitoylation by ZDHHC7 controls the insulin-dependent translocation of GLUT4 to the plasma membrane.

The protein localises to the cell membrane. Its subcellular location is the endomembrane system. It localises to the cytoplasm. The protein resides in the perinuclear region. The enzyme catalyses D-glucose(out) = D-glucose(in). Insulin-regulated facilitative glucose transporter, which plays a key role in removal of glucose from circulation. Response to insulin is regulated by its intracellular localization: in the absence of insulin, it is efficiently retained intracellularly within storage compartments in muscle and fat cells. Upon insulin stimulation, translocates from these compartments to the cell surface where it transports glucose from the extracellular milieu into the cell. This Sus scrofa (Pig) protein is Solute carrier family 2, facilitated glucose transporter member 4.